The sequence spans 222 residues: MQEQQYQLNSAVAEQREVSGVLRNTYGLLALTLAFSGLVAYVSQQMRLPYPNVFVVLIGFYGLFFLTVKLRNSAWGLVSTFALTGFMGYTLGPILNMYLGLPNGGSVITSAFAMTALVFFGLSAYVLTTRKDMSFLSGFITAGFFVLLGAVLVSLFFQISGLQLAISAGFVLFSSAMILYQTSAIIHGGERNYIMATISLYVSIYNLFISLLQIFGIAGGDD.

A run of 7 helical transmembrane segments spans residues 26-46 (YGLL…SQQM), 48-68 (LPYP…FLTV), 75-95 (WGLV…GPIL), 107-127 (VITS…AYVL), 139-159 (FITA…FFQI), 166-186 (ISAG…SAII), and 198-218 (ISLY…FGIA).

The protein belongs to the BI1 family.

The protein localises to the cell membrane. This is an uncharacterized protein from Pseudomonas aeruginosa (strain ATCC 15692 / DSM 22644 / CIP 104116 / JCM 14847 / LMG 12228 / 1C / PRS 101 / PAO1).